A 224-amino-acid chain; its full sequence is Phosphoribosyltransferase domain-containing protein 1 (224 aa).

Residues Glu-140 and Asp-141 each contribute to the Mg(2+) site. GMP is bound by residues Glu-140 to Thr-148, Lys-172, Phe-193 to Val-194, and Asp-200. Asp-200 is a Mg(2+) binding site.

The protein belongs to the purine/pyrimidine phosphoribosyltransferase family.

The polypeptide is Phosphoribosyltransferase domain-containing protein 1 (prtfdc1) (Xenopus laevis (African clawed frog)).